A 161-amino-acid chain; its full sequence is Large ribosomal subunit protein uL16 (161 aa).

Positions 140-161 are disordered; it reads LNKGNYKPAKTPVTADDSESSS.

The protein belongs to the universal ribosomal protein uL16 family. In terms of assembly, part of the 50S ribosomal subunit.

Binds 23S rRNA and is also seen to make contacts with the A and possibly P site tRNAs. In Prochlorococcus marinus (strain NATL1A), this protein is Large ribosomal subunit protein uL16.